The primary structure comprises 383 residues: Probable disease resistance protein At4g19060 (383 aa).

The interval 36-84 (YEKWSSGKQRGSSSKHGNQSTHGDSSPTRNSSGSSKKGRPKANRVETSS) is disordered. The span at 41–70 (SGKQRGSSSKHGNQSTHGDSSPTRNSSGSS) shows a compositional bias: polar residues. NB-ARC domains follow at residues 75-184 (PKAN…MFKH) and 207-281 (VKEK…LAKA). 121–128 (GKYGVGKT) is an ATP binding site.

In terms of biological role, possible disease resistance protein. In Arabidopsis thaliana (Mouse-ear cress), this protein is Probable disease resistance protein At4g19060.